The sequence spans 130 residues: Small ribosomal subunit protein uS8 (130 aa).

Belongs to the universal ribosomal protein uS8 family. As to quaternary structure, part of the 30S ribosomal subunit. Contacts proteins S5 and S12.

Functionally, one of the primary rRNA binding proteins, it binds directly to 16S rRNA central domain where it helps coordinate assembly of the platform of the 30S subunit. The sequence is that of Small ribosomal subunit protein uS8 from Nitrosococcus oceani (strain ATCC 19707 / BCRC 17464 / JCM 30415 / NCIMB 11848 / C-107).